Consider the following 127-residue polypeptide: Multiple antibiotic resistance protein MarA (127 aa).

The HTH araC/xylS-type domain occupies 12 to 110 (HSILDWIEDN…DVPPHKYRMT (99 aa)). DNA-binding regions (H-T-H motif) lie at residues 29-50 (EKVS…KKET) and 77-100 (ILYL…KNYF).

Monomer.

Its function is as follows. May be a transcriptional activator of genes involved in the multiple antibiotic resistance (Mar) phenotype. It can also activate genes such as sodA, zwf and micF. The chain is Multiple antibiotic resistance protein MarA (marA) from Escherichia coli (strain K12).